We begin with the raw amino-acid sequence, 391 residues long: Homoserine O-acetyltransferase (391 aa).

The AB hydrolase-1 domain maps to 50 to 360 (NAILICHALT…DKGHDAFLLD (311 aa)). The Nucleophile role is filled by Ser155. Arg225 lines the substrate pocket. Active-site residues include Asp321 and His354. Residue Asp355 coordinates substrate.

This sequence belongs to the AB hydrolase superfamily. MetX family. Homodimer.

Its subcellular location is the cytoplasm. The enzyme catalyses L-homoserine + acetyl-CoA = O-acetyl-L-homoserine + CoA. Its pathway is amino-acid biosynthesis; L-methionine biosynthesis via de novo pathway; O-acetyl-L-homoserine from L-homoserine: step 1/1. Functionally, transfers an acetyl group from acetyl-CoA to L-homoserine, forming acetyl-L-homoserine. The protein is Homoserine O-acetyltransferase of Rhodospirillum rubrum (strain ATCC 11170 / ATH 1.1.1 / DSM 467 / LMG 4362 / NCIMB 8255 / S1).